The sequence spans 156 residues: Small ribosomal subunit protein uS7 (156 aa).

The protein belongs to the universal ribosomal protein uS7 family. As to quaternary structure, part of the 30S ribosomal subunit. Contacts proteins S9 and S11.

In terms of biological role, one of the primary rRNA binding proteins, it binds directly to 16S rRNA where it nucleates assembly of the head domain of the 30S subunit. Is located at the subunit interface close to the decoding center, probably blocks exit of the E-site tRNA. The polypeptide is Small ribosomal subunit protein uS7 (Macrococcus caseolyticus (strain JCSC5402) (Macrococcoides caseolyticum)).